Consider the following 384-residue polypeptide: Galactokinase (384 aa).

34 to 37 (EHTD) contacts substrate. 123 to 129 (SSGLSSS) lines the ATP pocket. Residues serine 129 and glutamate 161 each coordinate Mg(2+). Aspartate 173 serves as the catalytic Proton acceptor. Residue tyrosine 222 participates in substrate binding.

The protein belongs to the GHMP kinase family. GalK subfamily.

Its subcellular location is the cytoplasm. The enzyme catalyses alpha-D-galactose + ATP = alpha-D-galactose 1-phosphate + ADP + H(+). Its pathway is carbohydrate metabolism; galactose metabolism. Its function is as follows. Catalyzes the transfer of the gamma-phosphate of ATP to D-galactose to form alpha-D-galactose-1-phosphate (Gal-1-P). The sequence is that of Galactokinase from Actinobacillus pleuropneumoniae serotype 5b (strain L20).